We begin with the raw amino-acid sequence, 570 residues long: Proline--tRNA ligase (570 aa).

The segment at 238-257 is disordered; that stretch reads ARPAPAEHAEPRPLEKVETP.

It belongs to the class-II aminoacyl-tRNA synthetase family. ProS type 1 subfamily. In terms of assembly, homodimer.

Its subcellular location is the cytoplasm. The catalysed reaction is tRNA(Pro) + L-proline + ATP = L-prolyl-tRNA(Pro) + AMP + diphosphate. Functionally, catalyzes the attachment of proline to tRNA(Pro) in a two-step reaction: proline is first activated by ATP to form Pro-AMP and then transferred to the acceptor end of tRNA(Pro). As ProRS can inadvertently accommodate and process non-cognate amino acids such as alanine and cysteine, to avoid such errors it has two additional distinct editing activities against alanine. One activity is designated as 'pretransfer' editing and involves the tRNA(Pro)-independent hydrolysis of activated Ala-AMP. The other activity is designated 'posttransfer' editing and involves deacylation of mischarged Ala-tRNA(Pro). The misacylated Cys-tRNA(Pro) is not edited by ProRS. The chain is Proline--tRNA ligase from Geobacter sulfurreducens (strain ATCC 51573 / DSM 12127 / PCA).